The sequence spans 252 residues: MTAAGVRATARIGARGDGRGGTSLPVLEGEGPLALRRTRASGSEARVMLVGAMSGPLGGDHFTVEATVAAGARLHVGSAAATIALPGQAKGEARYDVLLDVAAGGELRWLPEQLISAGGSELYVSTRIDLEPGARLVFREEQVLGRVGEEPGRLTSRLTLRIGGRAVLDQELACGPGAPGGWDGPAVLGGHRALGQLVVVRPEFEREPVRARLLGESAALTPLGGAAALVTALAPDALLLRRVLDEALSSLG.

It belongs to the UreD family. As to quaternary structure, ureD, UreF and UreG form a complex that acts as a GTP-hydrolysis-dependent molecular chaperone, activating the urease apoprotein by helping to assemble the nickel containing metallocenter of UreC. The UreE protein probably delivers the nickel.

Its subcellular location is the cytoplasm. In terms of biological role, required for maturation of urease via the functional incorporation of the urease nickel metallocenter. In Streptomyces avermitilis (strain ATCC 31267 / DSM 46492 / JCM 5070 / NBRC 14893 / NCIMB 12804 / NRRL 8165 / MA-4680), this protein is Urease accessory protein UreD.